The primary structure comprises 270 residues: uncharacterized protein (270 aa).

The first 22 residues, 1–22 (MEYIKKIALYMSVLLLIIFIGG), serve as a signal peptide directing secretion. Cys23 carries N-palmitoyl cysteine lipidation. Residue Cys23 is the site of S-diacylglycerol cysteine attachment.

This sequence belongs to the staphylococcal tandem lipoprotein family.

Its subcellular location is the cell membrane. This is an uncharacterized protein from Staphylococcus aureus (strain MW2).